Here is a 442-residue protein sequence, read N- to C-terminus: Probable carboxypeptidase PADG_04062 (442 aa).

Residues 1–20 form the signal peptide; sequence MKLQYLVALLSVQAVPPVTA. N-linked (GlcNAc...) asparagine glycosylation is present at N102. Residue D160 participates in Zn(2+) binding. E192 (proton acceptor) is an active-site residue. E193 lines the Zn(2+) pocket. N-linked (GlcNAc...) asparagine glycosylation is present at N343.

Belongs to the peptidase M20A family. Requires Zn(2+) as cofactor.

The protein resides in the secreted. This is Probable carboxypeptidase PADG_04062 from Paracoccidioides brasiliensis (strain Pb18).